The primary structure comprises 76 residues: Heat shock factor-binding protein 1 (76 aa).

Belongs to the HSBP1 family. As to quaternary structure, homohexamer. Associates with heptad repeats of HSF1 trimers and probably also HSF1 monomers, and with HSP70. Association with HSF1 trimers and HSP70 coincides with attenuation of heat shock response and the conversion of HSF1 trimer to monomer.

The protein resides in the nucleus. Functionally, negative regulator of the heat shock response. Negatively affects HSF1 DNA-binding activity. May have a role in the suppression of the activation of the stress response during the aging process. This chain is Heat shock factor-binding protein 1 (HSBP1), found in Homo sapiens (Human).